We begin with the raw amino-acid sequence, 300 residues long: Ribosomal RNA small subunit methyltransferase H (300 aa).

S-adenosyl-L-methionine contacts are provided by residues 46–48, aspartate 65, phenylalanine 92, aspartate 107, and glutamine 114; that span reads GGH.

This sequence belongs to the methyltransferase superfamily. RsmH family.

Its subcellular location is the cytoplasm. It catalyses the reaction cytidine(1402) in 16S rRNA + S-adenosyl-L-methionine = N(4)-methylcytidine(1402) in 16S rRNA + S-adenosyl-L-homocysteine + H(+). In terms of biological role, specifically methylates the N4 position of cytidine in position 1402 (C1402) of 16S rRNA. This Prochlorococcus marinus (strain MIT 9312) protein is Ribosomal RNA small subunit methyltransferase H.